A 232-amino-acid polypeptide reads, in one-letter code: uncharacterized protein (232 aa).

The tract at residues 1-46 (MNAHNMRGPPGDLAKVVPGSRSGWNEGSRCRQADKGDGQCRNGGRD) is disordered. The segment covering 28–46 (SRCRQADKGDGQCRNGGRD) has biased composition (basic and acidic residues).

This is an uncharacterized protein from Rhizobium meliloti (Ensifer meliloti).